A 217-amino-acid polypeptide reads, in one-letter code: Probable transaldolase (217 aa).

Catalysis depends on Lys83, which acts as the Schiff-base intermediate with substrate.

The protein belongs to the transaldolase family. Type 3B subfamily.

The protein resides in the cytoplasm. The catalysed reaction is D-sedoheptulose 7-phosphate + D-glyceraldehyde 3-phosphate = D-erythrose 4-phosphate + beta-D-fructose 6-phosphate. Its pathway is carbohydrate degradation; pentose phosphate pathway; D-glyceraldehyde 3-phosphate and beta-D-fructose 6-phosphate from D-ribose 5-phosphate and D-xylulose 5-phosphate (non-oxidative stage): step 2/3. Transaldolase is important for the balance of metabolites in the pentose-phosphate pathway. The sequence is that of Probable transaldolase from Erythrobacter litoralis (strain HTCC2594).